The following is a 144-amino-acid chain: Probable tail assembly protein gp41 (144 aa).

This sequence belongs to the mulikevirus tail assembly protein family.

It localises to the host cytoplasm. In terms of biological role, required for tail assembly. Together with FS-gp41, may act as a chaperone mediating the interaction between the tape measure protein (TMP) and the tail tube protein (TTP) thereby directing the polymerization of TTP to form a tail of the correct length (Potential). In Enterobacteriaceae (Bacteriophage Mu), this protein is Probable tail assembly protein gp41.